Consider the following 467-residue polypeptide: Retinoic acid receptor RXR-gamma (467 aa).

Residues 1 to 142 (MYGNYPHFIK…TSPGSLAKHI (142 aa)) form a modulating region. 2 NR C4-type zinc fingers span residues 143 to 163 (CAIC…CEGC) and 179 to 203 (CRDN…YQKC). The segment at residues 143-208 (CAICGDRSSG…RYQKCLAMGM (66 aa)) is a DNA-binding region (nuclear receptor). The interval 209 to 232 (KREAVQEERQGSRERSENEAESTS) is hinge. Over residues 214–226 (QEERQGSRERSEN) the composition is skewed to basic and acidic residues. Residues 214–237 (QEERQGSRERSENEAESTSGGSED) form a disordered region. In terms of domain architecture, NR LBD spans 235–463 (SEDMPVERIL…TFLMEMLETP (229 aa)).

This sequence belongs to the nuclear hormone receptor family. NR2 subfamily. In terms of assembly, homodimer. Heterodimer; with a RAR molecule. Binds DNA preferentially as a RAR/RXR heterodimer. As to expression, isoform 1 is highly expressed inliver. Isoform 2 is abundantly expressed in eye and dorsal root ganglia.

The protein localises to the nucleus. Functionally, receptor for retinoic acid. Retinoic acid receptors bind as heterodimers to their target response elements in response to their ligands, all-trans or 9-cis retinoic acid, and regulate gene expression in various biological processes. The RAR/RXR heterodimers bind to the retinoic acid response elements (RARE) composed of tandem 5'-AGGTCA-3' sites known as DR1-DR5. The high affinity ligand for RXRs is 9-cis retinoic acid. The sequence is that of Retinoic acid receptor RXR-gamma (RXRG) from Gallus gallus (Chicken).